Consider the following 227-residue polypeptide: Extracellular deoxyribonuclease (227 aa).

The first 20 residues, 1–20, serve as a signal peptide directing secretion; it reads MFRPLLSFTLARLVSLPLHA.

This sequence belongs to the EndA/NucM nuclease family.

It localises to the secreted. This is Extracellular deoxyribonuclease from Aeromonas hydrophila.